An 879-amino-acid polypeptide reads, in one-letter code: MKNMGLNEIREAYLNFFEGKGHLRMESFSLVPKNDKSLLLINAGMAPLKPYFTGVQTPPKSRVTTCQKCIRTGDIENVGKTSRHGTFFEMLGNFSFGDYFKCEVIPWAWEFVTKSLNIPKDKLYVTIYLDDDEAYDIWTKSTDIDPSRIFRLGKEDNFWEIGQGPCGPCSEIHYQREGEKINSVEEFIKKSDDDEVIEFWNLVFTQFDKDENENYNRLAHPNIDTGMGLERMATIMQGVNSIFEVDTIKAVLDEISEIANIKYGENKEKDISLRVITDHVRSVTFMISDGILPSNEGRGYVLRRLLRRASRHGKLLGIKGNFLYKVCKVVIENSHKAYKELKEKEEYIKKIIKLEEERFAETIDGGIQILNEYVDELINKGEKVLPGDKAFKLYDTYGFPIELTKEILEEKSIDIDEGGFTKEMEAQKQRARAAREETNYMGSEDTIINKLPIELQTEFLGYSELSVEAKIIAIIKGEELVEELKQGDKGIIIVDKTPFYSEKGGQIGDTGILAGKNVKVKIQDCRNNISGKILHFVEILEGSIKLQDTVNLTVDRLRRDAIRKNHSATHLLHEALKKIVGAHIEQAGSFVDEHRLRFDFNHFSSLTKEELKNVEKLVNKKIMEVIPVNTKVMNIEEAKESGAVALFDEKYDEKVRVVSLGDFSKELCGGTHVSNSGEIGLFKIISETGVAAGVRRIEGVTGFNALKYIEEKEALLEGLCEVLKCSNKDIINKATSQIEEIKNKEKEINNLKSKLASGSQEDILKNIKEVKGIKLVSGVLKDIDGGALRDLADKLRDKIQEGLVVLASVGEGKIQFVAMATKEAVAKGAHCGKIIKEVASIAGGGGGGRPDMAQAGGKNPEKAEEAIAKVEDILSSLVK.

His566, His570, Cys668, and His672 together coordinate Zn(2+).

The protein belongs to the class-II aminoacyl-tRNA synthetase family. The cofactor is Zn(2+).

The protein resides in the cytoplasm. It carries out the reaction tRNA(Ala) + L-alanine + ATP = L-alanyl-tRNA(Ala) + AMP + diphosphate. Its function is as follows. Catalyzes the attachment of alanine to tRNA(Ala) in a two-step reaction: alanine is first activated by ATP to form Ala-AMP and then transferred to the acceptor end of tRNA(Ala). Also edits incorrectly charged Ser-tRNA(Ala) and Gly-tRNA(Ala) via its editing domain. This is Alanine--tRNA ligase from Clostridium tetani (strain Massachusetts / E88).